Reading from the N-terminus, the 189-residue chain is Photosystem I assembly protein Ycf4 (189 aa).

A run of 2 helical transmembrane segments spans residues 25-45 (SVYF…LAGL) and 62-82 (LVFI…SLAG).

The protein belongs to the Ycf4 family.

Its subcellular location is the cellular thylakoid membrane. In terms of biological role, seems to be required for the assembly of the photosystem I complex. This is Photosystem I assembly protein Ycf4 from Synechococcus sp. (strain JA-2-3B'a(2-13)) (Cyanobacteria bacterium Yellowstone B-Prime).